We begin with the raw amino-acid sequence, 308 residues long: Porphobilinogen deaminase (308 aa).

An S-(dipyrrolylmethanemethyl)cysteine modification is found at Cys243.

The protein belongs to the HMBS family. Monomer. The cofactor is dipyrromethane.

The catalysed reaction is 4 porphobilinogen + H2O = hydroxymethylbilane + 4 NH4(+). The protein operates within porphyrin-containing compound metabolism; protoporphyrin-IX biosynthesis; coproporphyrinogen-III from 5-aminolevulinate: step 2/4. Tetrapolymerization of the monopyrrole PBG into the hydroxymethylbilane pre-uroporphyrinogen in several discrete steps. The polypeptide is Porphobilinogen deaminase (Mesorhizobium japonicum (strain LMG 29417 / CECT 9101 / MAFF 303099) (Mesorhizobium loti (strain MAFF 303099))).